A 243-amino-acid polypeptide reads, in one-letter code: Zwei Ig domain protein zig-6 (243 aa).

Residues 1 to 20 form the signal peptide; sequence MTKLCLLLLPLVFLVSYSFA. 2 Ig-like C2-type domains span residues 30-118 and 133-212; these read PNAN…MDVI and GQVL…KTVT. An intrachain disulfide couples cysteine 47 to cysteine 102. 2 N-linked (GlcNAc...) asparagine glycosylation sites follow: asparagine 91 and asparagine 142. Residues cysteine 145 and cysteine 196 are joined by a disulfide bond.

Expressed in head and tail body wall muscles.

The protein resides in the secreted. Its function is as follows. Probably not involved in maintaining the position of ASI and ASH head neuron cell bodies and ventral nerve cord axons of PVQ, PVP, RMEV, AVK and HSN neurons. In Caenorhabditis elegans, this protein is Zwei Ig domain protein zig-6.